The following is a 228-amino-acid chain: Small ribosomal subunit protein uS2 (228 aa).

The protein belongs to the universal ribosomal protein uS2 family.

The chain is Small ribosomal subunit protein uS2 from Blochmanniella pennsylvanica (strain BPEN).